The following is a 550-amino-acid chain: Chaperonin GroEL (550 aa).

ATP-binding positions include threonine 30 to proline 33, lysine 51, aspartate 87 to threonine 91, glycine 415, and aspartate 496.

This sequence belongs to the chaperonin (HSP60) family. As to quaternary structure, forms a cylinder of 14 subunits composed of two heptameric rings stacked back-to-back. Interacts with the co-chaperonin GroES.

Its subcellular location is the cytoplasm. It carries out the reaction ATP + H2O + a folded polypeptide = ADP + phosphate + an unfolded polypeptide.. Functionally, together with its co-chaperonin GroES, plays an essential role in assisting protein folding. The GroEL-GroES system forms a nano-cage that allows encapsulation of the non-native substrate proteins and provides a physical environment optimized to promote and accelerate protein folding. In Rickettsia typhi (strain ATCC VR-144 / Wilmington), this protein is Chaperonin GroEL.